We begin with the raw amino-acid sequence, 233 residues long: Small ribosomal subunit protein eS4 (233 aa).

An S4 RNA-binding domain is found at 37–99 (VPLVVVLRDV…RDEYYRVFPD (63 aa)).

Belongs to the eukaryotic ribosomal protein eS4 family.

This Halobacterium salinarum (strain ATCC 29341 / DSM 671 / R1) protein is Small ribosomal subunit protein eS4.